The following is a 264-amino-acid chain: Apolipoprotein A-I (264 aa).

The N-terminal stretch at 1-18 (MKAVVLAVALVFLTGSQA) is a signal peptide. 2 repeat units span residues 67-88 (LNLL…ERLG) and 89-110 (PLTR…QEMN). A 10 X approximate tandem repeats region spans residues 67–264 (LNLLENWDTL…DKASETLTAQ (198 aa)). Met109 is modified (methionine sulfoxide). The stretch at 111–121 (KDLEEVKQKVQ) is one 3; half-length repeat. 3 repeat units span residues 122-143 (PYLD…QKVA), 144-165 (PLGA…GRLS), and 166-187 (PVAE…TQLA). The 7; truncated repeat unit spans residues 188 to 207 (PHSEQMRESLAQRLAELKSN). Met193 bears the Methionine sulfoxide mark. Repeat 8 spans residues 208–229 (PTLNEYHTRAKTHLKTLGEKAR). The 9; half-length repeat unit spans residues 230 to 240 (PALEDLRHSLM). Methionine sulfoxide occurs at positions 240 and 242. The stretch at 241–264 (PMLETLKTQVQSVIDKASETLTAQ) is repeat 10.

This sequence belongs to the apolipoprotein A1/A4/E family. Homodimer. Interacts with APOA1BP and CLU. Component of a sperm activating protein complex (SPAP), consisting of APOA1, an immunoglobulin heavy chain, an immunoglobulin light chain and albumin. Interacts with NDRG1. Interacts with SCGB3A2. Interacts with NAXE and YJEFN3. Glycosylated. Post-translationally, palmitoylated. In terms of processing, may be acylated. Phosphorylation sites are present in the extracellular medium. As to expression, major protein of plasma HDL, also found in chylomicrons.

It is found in the secreted. Participates in the reverse transport of cholesterol from tissues to the liver for excretion by promoting cholesterol efflux from tissues and by acting as a cofactor for the lecithin cholesterol acyltransferase (LCAT). As part of the SPAP complex, activates spermatozoa motility. The protein is Apolipoprotein A-I (Apoa1) of Mus musculus (Mouse).